Reading from the N-terminus, the 490-residue chain is Tryptophan 5-hydroxylase 2 (490 aa).

The residue at position 19 (Ser19) is a Phosphoserine. The segment covering 31–42 (LGSSTLNKPNSG) has biased composition (polar residues). A disordered region spans residues 31-58 (LGSSTLNKPNSGKNDDKGNKGSSKREAA). Residues 43–58 (KNDDKGNKGSSKREAA) are compositionally biased toward basic and acidic residues. The ACT domain maps to 65 to 140 (AVVFSLKNEV…TIVTLNPPEN (76 aa)). Fe cation contacts are provided by His318, His323, and Glu363.

It belongs to the biopterin-dependent aromatic amino acid hydroxylase family. In terms of assembly, interacts with DNAJC12. Fe(2+) serves as cofactor. In terms of tissue distribution, brain specific.

The enzyme catalyses (6R)-L-erythro-5,6,7,8-tetrahydrobiopterin + L-tryptophan + O2 = 5-hydroxy-L-tryptophan + (4aS,6R)-4a-hydroxy-L-erythro-5,6,7,8-tetrahydrobiopterin. The protein operates within aromatic compound metabolism; serotonin biosynthesis; serotonin from L-tryptophan: step 1/2. The sequence is that of Tryptophan 5-hydroxylase 2 (TPH2) from Homo sapiens (Human).